Consider the following 521-residue polypeptide: ATP synthase subunit beta (521 aa).

Low complexity-rich tracts occupy residues 1–21 and 28–42; these read MAKA…AAKA and PKTT…TKSG. The disordered stretch occupies residues 1–42; the sequence is MAKAATPKTTAAAEAKPAAKAPAKKAAPKTTAAAKPAATKSG. An ATP-binding site is contributed by 199-206; sequence GGAGVGKT.

The protein belongs to the ATPase alpha/beta chains family. As to quaternary structure, F-type ATPases have 2 components, CF(1) - the catalytic core - and CF(0) - the membrane proton channel. CF(1) has five subunits: alpha(3), beta(3), gamma(1), delta(1), epsilon(1). CF(0) has three main subunits: a(1), b(2) and c(9-12). The alpha and beta chains form an alternating ring which encloses part of the gamma chain. CF(1) is attached to CF(0) by a central stalk formed by the gamma and epsilon chains, while a peripheral stalk is formed by the delta and b chains.

It is found in the cell inner membrane. The enzyme catalyses ATP + H2O + 4 H(+)(in) = ADP + phosphate + 5 H(+)(out). Produces ATP from ADP in the presence of a proton gradient across the membrane. The catalytic sites are hosted primarily by the beta subunits. This chain is ATP synthase subunit beta, found in Brucella canis (strain ATCC 23365 / NCTC 10854 / RM-666).